Reading from the N-terminus, the 933-residue chain is Protein translocase subunit SecA (933 aa).

ATP contacts are provided by residues glutamine 87, glycine 105–threonine 109, and aspartate 515. Zn(2+) contacts are provided by cysteine 917, cysteine 919, cysteine 928, and histidine 929.

This sequence belongs to the SecA family. In terms of assembly, monomer and homodimer. Part of the essential Sec protein translocation apparatus which comprises SecA, SecYEG and auxiliary proteins SecDF-YajC and YidC. Zn(2+) serves as cofactor.

The protein localises to the cell inner membrane. The protein resides in the cytoplasm. The catalysed reaction is ATP + H2O + cellular proteinSide 1 = ADP + phosphate + cellular proteinSide 2.. In terms of biological role, part of the Sec protein translocase complex. Interacts with the SecYEG preprotein conducting channel. Has a central role in coupling the hydrolysis of ATP to the transfer of proteins into and across the cell membrane, serving both as a receptor for the preprotein-SecB complex and as an ATP-driven molecular motor driving the stepwise translocation of polypeptide chains across the membrane. The sequence is that of Protein translocase subunit SecA from Burkholderia cenocepacia (strain ATCC BAA-245 / DSM 16553 / LMG 16656 / NCTC 13227 / J2315 / CF5610) (Burkholderia cepacia (strain J2315)).